Consider the following 310-residue polypeptide: DNA repair nuclease APEX1 (310 aa).

Residues 1-51 (MPKRAKKNEEGVDGEADNGTAAAKKEKKGKEPEAPILYEDPPEKLTSKDGR) form a disordered region. The span at 41-51 (PPEKLTSKDGR) shows a compositional bias: basic and acidic residues. Residues aspartate 63 and glutamate 89 each contribute to the Mg(2+) site. Residue tyrosine 164 is part of the active site. Mg(2+) contacts are provided by aspartate 203, asparagine 205, and aspartate 300. Aspartate 203 serves as the catalytic Proton donor/acceptor.

The protein belongs to the DNA repair enzymes AP/ExoA family. Mg(2+) is required as a cofactor. Requires Mn(2+) as cofactor.

The protein resides in the nucleus. It is found in the nucleolus. The protein localises to the nucleus speckle. It localises to the endoplasmic reticulum. Its subcellular location is the cytoplasm. The protein resides in the mitochondrion. The enzyme catalyses Exonucleolytic cleavage in the 3'- to 5'-direction to yield nucleoside 5'-phosphates.. Functionally, functions as an apurinic/apyrimidinic (AP) endodeoxyribonuclease in the DNA base excision repair (BER) pathway of DNA lesions induced by oxidative and alkylating agents. Initiates repair of AP sites in DNA by catalyzing hydrolytic incision of the phosphodiester backbone immediately adjacent to the damage, generating a single-strand break with 5'-deoxyribose phosphate and 3'-hydroxyl ends. Has 3'-5' exoribonuclease activity on mismatched deoxyribonucleotides at the 3' termini of nicked or gapped DNA molecules during short-patch BER. May also play a role in the epigenetic regulation of gene expression by participating in DNA demethylation. Required for passage through the mid-blastula transition MBT. May also act as an endoribonuclease involved in the control of single-stranded RNA metabolism. Has no redox activity. Binds DNA and RNA. In Danio rerio (Zebrafish), this protein is DNA repair nuclease APEX1 (apex1).